A 328-amino-acid polypeptide reads, in one-letter code: GMP reductase (328 aa).

Catalysis depends on cysteine 174, which acts as the Thioimidate intermediate. 203 to 226 (IIADGGIRTHGDIAKSIRFGASMV) contributes to the NADP(+) binding site.

The protein belongs to the IMPDH/GMPR family. GuaC type 2 subfamily.

The enzyme catalyses IMP + NH4(+) + NADP(+) = GMP + NADPH + 2 H(+). Its function is as follows. Catalyzes the irreversible NADPH-dependent deamination of GMP to IMP. It functions in the conversion of nucleobase, nucleoside and nucleotide derivatives of G to A nucleotides, and in maintaining the intracellular balance of A and G nucleotides. This is GMP reductase from Staphylococcus saprophyticus subsp. saprophyticus (strain ATCC 15305 / DSM 20229 / NCIMB 8711 / NCTC 7292 / S-41).